The primary structure comprises 148 residues: Small ribosomal subunit protein uS15 (148 aa).

Positions 1–23 (MRKSKEKGRSGSTRPPQLKKPEW) are disordered.

The protein belongs to the universal ribosomal protein uS15 family. Part of the 30S ribosomal subunit.

The protein is Small ribosomal subunit protein uS15 of Thermofilum pendens (strain DSM 2475 / Hrk 5).